We begin with the raw amino-acid sequence, 515 residues long: 1-pyrroline-5-carboxylate dehydrogenase (515 aa).

Active-site residues include glutamate 286 and cysteine 320.

It belongs to the aldehyde dehydrogenase family. RocA subfamily.

It carries out the reaction L-glutamate 5-semialdehyde + NAD(+) + H2O = L-glutamate + NADH + 2 H(+). Its pathway is amino-acid degradation; L-proline degradation into L-glutamate; L-glutamate from L-proline: step 2/2. In Bacillus cytotoxicus (strain DSM 22905 / CIP 110041 / 391-98 / NVH 391-98), this protein is 1-pyrroline-5-carboxylate dehydrogenase.